The sequence spans 483 residues: Succinate semialdehyde dehydrogenase (483 aa).

NAD(+)-binding positions include 156-157 (WN), 180-183 (KPAP), and 233-234 (GS). The Proton acceptor role is filled by Glu-255. An NAD(+)-binding site is contributed by Leu-256. The Nucleophile role is filled by Cys-289. Glu-386 is an NAD(+) binding site.

It belongs to the aldehyde dehydrogenase family. In terms of assembly, homotetramer.

It carries out the reaction succinate semialdehyde + NAD(+) + H2O = succinate + NADH + 2 H(+). Functionally, involved in the degradation of the pyridine ring of trigonelline (TG; N-methylnicotinate) into succinate and methylamine as carbon and nitrogen sources, respectively. Catalyzes the NAD(+)-dependent oxidation of succinate semialdehyde to succinate. The protein is Succinate semialdehyde dehydrogenase of Acinetobacter baylyi (strain ATCC 33305 / BD413 / ADP1).